A 346-amino-acid chain; its full sequence is DNA-directed RNA polymerases I and III subunit RPAC1 (346 aa).

Ala2 carries the post-translational modification N-acetylalanine.

Belongs to the archaeal Rpo3/eukaryotic RPB3 RNA polymerase subunit family. Component of the RNA polymerase I and RNA polymerase III complexes consisting of at least 13 and 17 subunits, respectively. Pol I complex consists of a ten-subunit catalytic core composed of POLR1A/RPA1, POLR1B/RPA2, POLR1C/RPAC1, POLR1D/RPAC2, POLR1H/RPA12, POLR2E/RPABC1, POLR2F/RPABC2, POLR2H/RPABC3, POLR2K/RPABC4 and POLR2L/RPABC5; a mobile stalk subunit POLR1F/RPA43 protruding from the core and additional subunits homologous to general transcription factors POLR1E/RPA49 and POLR1G/RPA34. Part of Pol I pre-initiation complex (PIC), in which Pol I core assembles with RRN3 and promoter-bound UTBF and SL1/TIF-IB complex. Pol III complex consists of a ten-subunit catalytic core composed of POLR3A/RPC1, POLR3B/RPC2, POLR1C/RPAC1, POLR1D/RPAC2, POLR3K/RPC10, POLR2E/RPABC1, POLR2F/RPABC2, POLR2H/RPABC3, POLR2K/RPABC4 and POLR2L/RPABC5; a mobile stalk composed of two subunits POLR3H/RPC8 and CRCP/RPC9, protruding from the core and functioning primarily in transcription initiation; and additional subunits homologous to general transcription factors of the RNA polymerase II machinery, POLR3C/RPC3-POLR3F/RPC6-POLR3G/RPC7 heterotrimer required for transcription initiation and POLR3D/RPC4-POLR3E/RPC5 heterodimer involved in both transcription initiation and termination.

Its subcellular location is the nucleus. It is found in the cytoplasm. The protein resides in the cytosol. In terms of biological role, DNA-dependent RNA polymerase catalyzes the transcription of DNA into RNA using the four ribonucleoside triphosphates as substrates. Common component of RNA polymerases I and III which synthesize ribosomal RNA precursors and short non-coding RNAs including 5S rRNA, snRNAs, tRNAs and miRNAs, respectively. POLR1C/RPAC1 is part of the polymerase core and may function as a clamp element that moves to open and close the cleft. This chain is DNA-directed RNA polymerases I and III subunit RPAC1, found in Mus musculus (Mouse).